A 207-amino-acid chain; its full sequence is Large ribosomal subunit protein bL25 (207 aa).

A disordered region spans residues 171–207; sequence EEETVVTVSAPRAEEEPTTTEAPEPEAVHGNDEEPVE. The segment covering 196–207 has biased composition (basic and acidic residues); sequence EAVHGNDEEPVE.

This sequence belongs to the bacterial ribosomal protein bL25 family. CTC subfamily. Part of the 50S ribosomal subunit; part of the 5S rRNA/L5/L18/L25 subcomplex. Contacts the 5S rRNA. Binds to the 5S rRNA independently of L5 and L18.

In terms of biological role, this is one of the proteins that binds to the 5S RNA in the ribosome where it forms part of the central protuberance. The protein is Large ribosomal subunit protein bL25 of Listeria innocua serovar 6a (strain ATCC BAA-680 / CLIP 11262).